A 244-amino-acid polypeptide reads, in one-letter code: Rho-related GTP-binding protein RhoE (244 aa).

30–37 (GDSQCGRT) is a binding site for GTP. An Effector region motif is present at residues 52–60 (YVPTVFENY). GTP is bound by residues 77–81 (DTSGS) and 135–138 (CKSD). Cysteine methyl ester is present on Cys-241. Cys-241 carries S-farnesyl cysteine lipidation. Positions 242-244 (TVM) are cleaved as a propeptide — removed in mature form.

Belongs to the small GTPase superfamily. Rho family. Binds ROCK1. Interacts with UBXD5.

It is found in the cell membrane. Binds GTP but lacks intrinsic GTPase activity and is resistant to Rho-specific GTPase-activating proteins. The sequence is that of Rho-related GTP-binding protein RhoE (RND3) from Sus scrofa (Pig).